The chain runs to 222 residues: N-(5'-phosphoribosyl)anthranilate isomerase (222 aa).

It belongs to the TrpF family.

It catalyses the reaction N-(5-phospho-beta-D-ribosyl)anthranilate = 1-(2-carboxyphenylamino)-1-deoxy-D-ribulose 5-phosphate. It participates in amino-acid biosynthesis; L-tryptophan biosynthesis; L-tryptophan from chorismate: step 3/5. The protein is N-(5'-phosphoribosyl)anthranilate isomerase of Rhizobium etli (strain ATCC 51251 / DSM 11541 / JCM 21823 / NBRC 15573 / CFN 42).